We begin with the raw amino-acid sequence, 205 residues long: MEVDINGVNRTNNSVPSTTEGSSPSKPDPEKPRCSSTPCSPIRRTVSGYQILHMDANFLVGFTTGEELLKLAHKCATTEENPGESLPAFRSKQLESGLSRSSRIYKARGRQYQPYEIPAVNGRRRRRMPSSGDKCNKAVPYEPYKAVHGPLPLCLLKGKRAHSKSLDYLNLDKMNIKESADTEVLQYQLQHLTLRGDRVFARNNT.

The tract at residues 1-40 (MEVDINGVNRTNNSVPSTTEGSSPSKPDPEKPRCSSTPCS) is disordered. The segment covering 8–25 (VNRTNNSVPSTTEGSSPS) has biased composition (polar residues).

This sequence belongs to the UNC119-binding protein family. In terms of assembly, interacts with unc119 family proteins; interaction preferentially takes place when unc119 proteins are unliganded with myristoylated proteins.

Its subcellular location is the cytoplasm. The protein resides in the cell projection. It is found in the cilium. Its function is as follows. May play a role in immune regulation through regulation of the macrophage function. May also play a role in trafficking of proteins via its interaction with unc119 family cargo adapters. May play a role in ciliary membrane localization. The sequence is that of Macrophage immunometabolism regulator (macir) from Xenopus tropicalis (Western clawed frog).